The sequence spans 294 residues: Probable 2-(5''-triphosphoribosyl)-3'-dephosphocoenzyme-A synthase (294 aa).

Belongs to the CitG/MdcB family.

It catalyses the reaction 3'-dephospho-CoA + ATP = 2'-(5''-triphospho-alpha-D-ribosyl)-3'-dephospho-CoA + adenine. In Streptococcus equi subsp. zooepidemicus (strain MGCS10565), this protein is Probable 2-(5''-triphosphoribosyl)-3'-dephosphocoenzyme-A synthase.